The sequence spans 862 residues: Rab GTPase-binding effector protein 1 (862 aa).

A2 carries the N-acetylalanine modification. Residues 11–345 (DVSLQQRVAE…KKTDTEEEVK (335 aa)) are a coiled coil. The residue at position 282 (K282) is an N6-acetyllysine. Positions 315-374 (ELKKKDQEEDEQQRVNKRKDNKKTDTEEEVKIPVVCALTQEESSTPLSNEEEHLDSTHGS) are disordered. Over residues 336 to 345 (KKTDTEEEVK) the composition is skewed to basic and acidic residues. A phosphoserine mark is found at S374, S377, and S407. Phosphothreonine is present on T408. Residue S410 is modified to Phosphoserine. The stretch at 534–816 (DMCSNYEKQL…LQTELDVSEQ (283 aa)) forms a coiled coil.

This sequence belongs to the rabaptin family. As to quaternary structure, heterodimer with RABGEF1. The heterodimer binds RAB4A and RAB5A that have been activated by GTP-binding. Interacts with TSC2. Interacts with GGA1 (via GAE domain), GGA2 (via GAE domain) and GGA3 (via GAE domain). Interacts with AP1G1 (via GAE domain). Interacts with AP1G2 (via GAE domain). Interacts with ECPAS. Interacts with KCNH1. Interacts with PKD1 (via C-terminal domain) and GGA1; the interactions recruit PKD1:PKD2 complex to GGA1 and ARL3 at trans-Golgi network. Interacts with KCNH1. Post-translationally, proteolytic cleavage by caspases in apoptotic cells causes loss of endosome fusion activity.

It localises to the cytoplasm. It is found in the early endosome. The protein localises to the recycling endosome. The protein resides in the cytoplasmic vesicle. Rab effector protein acting as linker between gamma-adaptin, RAB4A and RAB5A. Involved in endocytic membrane fusion and membrane trafficking of recycling endosomes. Involved in KCNH1 channels trafficking to and from the cell membrane. Stimulates RABGEF1 mediated nucleotide exchange on RAB5A. Mediates the traffic of PKD1:PKD2 complex from the endoplasmic reticulum through the Golgi to the cilium. The protein is Rab GTPase-binding effector protein 1 (Rabep1) of Mus musculus (Mouse).